We begin with the raw amino-acid sequence, 547 residues long: Chaperonin GroEL (547 aa).

Residues 30 to 33, K51, 87 to 91, G415, and D496 each bind ATP; these read TLGP and DGTTT. The disordered stretch occupies residues 527–547; it reads SDKEEPMPMRGGMGGMGGMDF. A compositionally biased stretch (gly residues) spans 537 to 547; it reads GGMGGMGGMDF.

It belongs to the chaperonin (HSP60) family. In terms of assembly, forms a cylinder of 14 subunits composed of two heptameric rings stacked back-to-back. Interacts with the co-chaperonin GroES.

It is found in the cytoplasm. The enzyme catalyses ATP + H2O + a folded polypeptide = ADP + phosphate + an unfolded polypeptide.. Together with its co-chaperonin GroES, plays an essential role in assisting protein folding. The GroEL-GroES system forms a nano-cage that allows encapsulation of the non-native substrate proteins and provides a physical environment optimized to promote and accelerate protein folding. The polypeptide is Chaperonin GroEL (Rickettsia massiliae (strain Mtu5)).